Consider the following 364-residue polypeptide: DNA replication and repair protein RecF (364 aa).

30-37 (GRNAQGKT) contributes to the ATP binding site.

The protein belongs to the RecF family.

It localises to the cytoplasm. The RecF protein is involved in DNA metabolism; it is required for DNA replication and normal SOS inducibility. RecF binds preferentially to single-stranded, linear DNA. It also seems to bind ATP. In Pelotomaculum thermopropionicum (strain DSM 13744 / JCM 10971 / SI), this protein is DNA replication and repair protein RecF.